Consider the following 392-residue polypeptide: uncharacterized protein (392 aa).

The protein belongs to the glycosyltransferase group 1 family. Glycosyltransferase 4 subfamily.

This is an uncharacterized protein from Methanocaldococcus jannaschii (strain ATCC 43067 / DSM 2661 / JAL-1 / JCM 10045 / NBRC 100440) (Methanococcus jannaschii).